We begin with the raw amino-acid sequence, 588 residues long: Neopullulanase (588 aa).

5 residues coordinate Ca(2+): asparagine 147, asparagine 149, serine 153, glycine 172, and aspartate 174. Positions 247 and 326 each coordinate substrate. Residue aspartate 328 is the Nucleophile of the active site. Glutamate 357 acts as the Proton donor in catalysis. Residues 423–424 (HD), aspartate 468, and arginine 472 each bind substrate.

The protein belongs to the glycosyl hydrolase 13 family. Homodimer. Ca(2+) serves as cofactor.

It carries out the reaction Hydrolysis of pullulan to panose (6-alpha-D-glucosylmaltose).. Its function is as follows. Hydrolyzes pullulan efficiently but only a small amount of starch. Endohydrolysis of 1,4-alpha-glucosidic linkages in pullulan to form panose. Also cleaves (1-6)-alpha-glucosidic linkages to form maltotriose. This chain is Neopullulanase (nplT), found in Geobacillus stearothermophilus (Bacillus stearothermophilus).